The primary structure comprises 307 residues: Transmembrane protein 200B (307 aa).

The interval M1 to E38 is disordered. Residues G10–V20 are compositionally biased toward basic and acidic residues. The segment covering R22–R34 has biased composition (basic residues). The helical transmembrane segment at G53–G73 threads the bilayer. The segment at A81–H111 is disordered. N88 carries N-linked (GlcNAc...) asparagine glycosylation. Over residues E96–H111 the composition is skewed to basic and acidic residues. A helical transmembrane segment spans residues L116–L136. Residues A180–A211 form a disordered region.

This sequence belongs to the TMEM200 family.

The protein localises to the membrane. This Homo sapiens (Human) protein is Transmembrane protein 200B (TMEM200B).